Here is a 337-residue protein sequence, read N- to C-terminus: F420-dependent glucose-6-phosphate dehydrogenase (337 aa).

Residue Asp-40 participates in coenzyme F420-(gamma-Glu)n binding. The Proton donor role is filled by His-41. Coenzyme F420-(gamma-Glu)n contacts are provided by residues Thr-77 and 108 to 109 (TG). Glu-110 (proton acceptor) is an active-site residue. Coenzyme F420-(gamma-Glu)n contacts are provided by residues Asn-113, 178–179 (GG), and 181–182 (VV). Residues Thr-196, Lys-199, Lys-260, and Arg-284 each coordinate substrate.

This sequence belongs to the F420-dependent glucose-6-phosphate dehydrogenase family. Homodimer.

The enzyme catalyses oxidized coenzyme F420-(gamma-L-Glu)(n) + D-glucose 6-phosphate + H(+) = 6-phospho-D-glucono-1,5-lactone + reduced coenzyme F420-(gamma-L-Glu)(n). Catalyzes the coenzyme F420-dependent oxidation of glucose 6-phosphate (G6P) to 6-phosphogluconolactone. This Rhodococcus hoagii (strain 103S) (Rhodococcus equi) protein is F420-dependent glucose-6-phosphate dehydrogenase.